Consider the following 536-residue polypeptide: Phosphoenolpyruvate carboxykinase (ATP) (536 aa).

Substrate contacts are provided by arginine 61, tyrosine 195, and lysine 201. Residues lysine 201, histidine 220, and 236-244 each bind ATP; that span reads GLSGTGKTT. Residues lysine 201 and histidine 220 each contribute to the Mn(2+) site. Aspartate 257 lines the Mn(2+) pocket. ATP-binding residues include glutamate 285, arginine 322, and threonine 447. A substrate-binding site is contributed by arginine 322.

It belongs to the phosphoenolpyruvate carboxykinase (ATP) family. The cofactor is Mn(2+).

The protein localises to the cytoplasm. It catalyses the reaction oxaloacetate + ATP = phosphoenolpyruvate + ADP + CO2. Its pathway is carbohydrate biosynthesis; gluconeogenesis. Functionally, involved in the gluconeogenesis. Catalyzes the conversion of oxaloacetate (OAA) to phosphoenolpyruvate (PEP) through direct phosphoryl transfer between the nucleoside triphosphate and OAA. The chain is Phosphoenolpyruvate carboxykinase (ATP) from Brucella suis biovar 1 (strain 1330).